A 396-amino-acid chain; its full sequence is NADH-quinone oxidoreductase subunit D 1 (396 aa).

Belongs to the complex I 49 kDa subunit family. NDH-1 is composed of 14 different subunits. Subunits NuoB, C, D, E, F, and G constitute the peripheral sector of the complex.

The protein resides in the cell inner membrane. The catalysed reaction is a quinone + NADH + 5 H(+)(in) = a quinol + NAD(+) + 4 H(+)(out). Its function is as follows. NDH-1 shuttles electrons from NADH, via FMN and iron-sulfur (Fe-S) centers, to quinones in the respiratory chain. The immediate electron acceptor for the enzyme in this species is believed to be ubiquinone. Couples the redox reaction to proton translocation (for every two electrons transferred, four hydrogen ions are translocated across the cytoplasmic membrane), and thus conserves the redox energy in a proton gradient. This is NADH-quinone oxidoreductase subunit D 1 from Beijerinckia indica subsp. indica (strain ATCC 9039 / DSM 1715 / NCIMB 8712).